Consider the following 171-residue polypeptide: 3-hydroxydecanoyl-[acyl-carrier-protein] dehydratase (171 aa).

H70 is an active-site residue.

The protein belongs to the thioester dehydratase family. FabA subfamily. Homodimer.

It localises to the cytoplasm. The catalysed reaction is a (3R)-hydroxyacyl-[ACP] = a (2E)-enoyl-[ACP] + H2O. The enzyme catalyses (3R)-hydroxydecanoyl-[ACP] = (2E)-decenoyl-[ACP] + H2O. It carries out the reaction (2E)-decenoyl-[ACP] = (3Z)-decenoyl-[ACP]. It functions in the pathway lipid metabolism; fatty acid biosynthesis. In terms of biological role, necessary for the introduction of cis unsaturation into fatty acids. Catalyzes the dehydration of (3R)-3-hydroxydecanoyl-ACP to E-(2)-decenoyl-ACP and then its isomerization to Z-(3)-decenoyl-ACP. Can catalyze the dehydratase reaction for beta-hydroxyacyl-ACPs with saturated chain lengths up to 16:0, being most active on intermediate chain length. This Shewanella baltica (strain OS223) protein is 3-hydroxydecanoyl-[acyl-carrier-protein] dehydratase.